Consider the following 42-residue polypeptide: Photosystem I reaction center subunit IX (42 aa).

Residues 7-27 (YLSTAPVLAAIWFGILAGLLI) traverse the membrane as a helical segment.

This sequence belongs to the PsaJ family.

Its subcellular location is the plastid. It localises to the chloroplast thylakoid membrane. Functionally, may help in the organization of the PsaE and PsaF subunits. This chain is Photosystem I reaction center subunit IX, found in Staurastrum punctulatum (Green alga).